Consider the following 324-residue polypeptide: MNKRKHMDIRRLIISLPAIMALWGGLASCDKMIYDNYDDCPRGVYVNFYSQTECAENPSYPAEVARLNVYAFDKDGILRSANVFEDVQLSAAKEWLIPLEKDGLYTIFAWGNIDDHYNIGEIKIGETTKQQVLMRLKQDGKWATNIDGTTLWYATSPVVELKNMEDGADQYIHTRANLREYTNRVTVSVDSLPHPENYEIKLASSNGSYRFDGTVAKADSTYYPGETKVVGDSTCRAFFTTLKLESGHENTLSVTHKPTGREIFRTDLVGAILSSQYAQNINLRCINDFDIRLVAHHCNCPDDTYVVVQIWINGWLIHSYEIEL.

The N-terminal stretch at 1–28 is a signal peptide; sequence MNKRKHMDIRRLIISLPAIMALWGGLAS. C29 carries N-palmitoyl cysteine lipidation. C29 carries the S-diacylglycerol cysteine lipid modification.

The protein belongs to the bacteroidetes fimbrillin superfamily. FimB/Mfa2 family. As to quaternary structure, mfa2 is not part of the fimbrium itself, but anchors the fimbrium in the outer membrane via its interaction with Mfa1. Linear, head-to-tail oligomerization of fimbrial subunits mediates assembly of the fimbrium stalk, while the minor components Mfa3, Mfa4 and Mfa5 probably form the fimbrium tip. The anchoring subunit Mfa2 limits fimbrium length and is important for solid fimbrium attachment to the outer membrane. In its absence, the minor fimbriae become very long and are easily detached from the membrane. In terms of processing, palmitoylated. Palmitoylation is important for export to the outer membrane. Post-translationally, unlike other fimbrial subunits, does not contain a propeptide that is cleaved by gingipain.

The protein resides in the cell outer membrane. Functionally, anchoring subunit of the minor fimbriae. Regulates fimbrial length. These filamentous pili are attached to the cell surface; they mediate biofilm formation, adhesion onto host cells and onto other bacteria that are part of the oral microbiome. Fimbriae of P.gingivalis are major virulence factors. In Porphyromonas gingivalis (strain ATCC 33277 / DSM 20709 / CIP 103683 / JCM 12257 / NCTC 11834 / 2561), this protein is Minor fimbrium anchoring subunit Mfa2 (mfa2).